Consider the following 229-residue polypeptide: Uracil-DNA glycosylase (229 aa).

Residue D64 is the Proton acceptor of the active site.

It belongs to the uracil-DNA glycosylase (UDG) superfamily. UNG family.

Its subcellular location is the cytoplasm. The catalysed reaction is Hydrolyzes single-stranded DNA or mismatched double-stranded DNA and polynucleotides, releasing free uracil.. In terms of biological role, excises uracil residues from the DNA which can arise as a result of misincorporation of dUMP residues by DNA polymerase or due to deamination of cytosine. In Escherichia coli O45:K1 (strain S88 / ExPEC), this protein is Uracil-DNA glycosylase.